We begin with the raw amino-acid sequence, 332 residues long: Phenylalanine--tRNA ligase alpha subunit (332 aa).

Glu-252 is a binding site for Mg(2+).

Belongs to the class-II aminoacyl-tRNA synthetase family. Phe-tRNA synthetase alpha subunit type 1 subfamily. Tetramer of two alpha and two beta subunits. It depends on Mg(2+) as a cofactor.

Its subcellular location is the cytoplasm. It carries out the reaction tRNA(Phe) + L-phenylalanine + ATP = L-phenylalanyl-tRNA(Phe) + AMP + diphosphate + H(+). The protein is Phenylalanine--tRNA ligase alpha subunit of Marinobacter nauticus (strain ATCC 700491 / DSM 11845 / VT8) (Marinobacter aquaeolei).